Reading from the N-terminus, the 354-residue chain is Envelope protein US28 (354 aa).

Topologically, residues 1 to 37 (MTPTTTTAELTTEFDYDEDATPCVFTDVLNQSKPVTL) are extracellular. N-linked (GlcNAc...) asparagine; by host glycosylation occurs at N30. The helical transmembrane segment at 38–58 (FLYGVVFLFGSIGNFLVIFTI) threads the bilayer. Residues 59–69 (TWRRRIQCSGD) are Cytoplasmic-facing. The chain crosses the membrane as a helical span at residues 70–90 (VYFINLAAADLLFVCTLPLWM). Residues 91–101 (QYLLDHNSLAS) are Extracellular-facing. A helical transmembrane segment spans residues 102–122 (VPCTLLTACFYVAMFASLCFI). Topologically, residues 123–145 (TEIALDRYYAIVYMRYRPVKQAC) are cytoplasmic. A helical membrane pass occupies residues 146 to 166 (LFSIFWWIFAVIIAIPHFMVV). The Extracellular portion of the chain corresponds to 167–183 (TKKDNQCMTDYDYLEVS). The chain crosses the membrane as a helical span at residues 184–204 (YPIILNVELMLGAFVIPLSVI). Topologically, residues 205 to 228 (SYCYYRISRIVAVSQSRHKGRIVR) are cytoplasmic. The chain crosses the membrane as a helical span at residues 229-249 (VLIAVVLVFIIFWLPYHLTLF). At 250 to 273 (VDTLKLLKWISSSCEFERSLKRAL) the chain is on the extracellular side. A helical transmembrane segment spans residues 274–294 (ILTESLAFCHCCLNPLLYVFV). Topologically, residues 295 to 354 (GTKFRQELHCLLAEFRQRLFSRDVSWYHSMSFSRRGSPSRRETSSDTLSDEVCRVSQIIP) are cytoplasmic.

The protein belongs to the G-protein coupled receptor 1 family. In terms of assembly, interacts with host GPRASP1; this interaction targets US28 to lysosomes for degradation. Interacts with host CX3CL1/Fractalkine (via N-terminus). Post-translationally, phosphorylated. High phosphorylation occurs concomitantly with receptor endocytosis and correlate with low receptor presence at the plasma membrane.

It localises to the host cell membrane. Its function is as follows. Receptor for a C-C type chemokine. Binds to a great number of different CC-chemokines including CCL5/RANTES, CCL2/MCP-1, CCL3/MIP-1-alpha as well as CX3CL1/Fractalkine. Transduces signals resulting in the activation of MAP kinase signaling pathways and augmentation of intracellular calcium ion levels, leading to alterations in chemotactic behavior of vascular smooth muscle cells and macrophages. The US28 receptor also exhibits high levels of agonist-independent signaling activity and agonist-independent endocytosis. Interacts with the host Gi complex without activating it, thereby probably interfering with the chemokine-Gi signaling. May also function as a G protein sink to sequester G protein from the cell surface via internalization. Interacts with endogenous Gaq/11 subunits and thereby constitutively activates phospholipase C. The chain is Envelope protein US28 (US28) from Human cytomegalovirus (strain Merlin) (HHV-5).